A 374-amino-acid polypeptide reads, in one-letter code: Retron Eco8 reverse transcriptase (374 aa).

A Reverse transcriptase domain is found at 25 to 252; that stretch reads ENIITQSAIP…KEISINGYVI (228 aa). Mg(2+)-binding residues include aspartate 107, aspartate 200, and aspartate 201.

It belongs to the bacterial reverse transcriptase family.

It carries out the reaction DNA(n) + a 2'-deoxyribonucleoside 5'-triphosphate = DNA(n+1) + diphosphate. In terms of biological role, reverse transcriptase (RT) component of antiviral defense system retron Eco8, composed of this RT, the following endonuclease and a non-coding RNA (ncRNA) encoded between them. Expression of retron Eco8 confers protection against bacteriophages T4, T6, T7 and SECphi4, SECphi6 and SECphi18. At multiplicity of infection (MOI) of 0.02 cultures slow growth when infected with SECphi4 but do not collapse, at MOI 2 cultures collapse. Responsible for synthesis of msDNA (a branched molecule with RNA linked by a 2',5'-phosphodiester bond to ssDNA). The retron transcript serves as primer (from a conserved internal G residue) and template for the reaction, and codes for the RT. This chain is Retron Eco8 reverse transcriptase, found in Escherichia coli.